We begin with the raw amino-acid sequence, 355 residues long: Methylxanthine N3-demethylase NdmB (355 aa).

Residues W19–V131 enclose the Rieske domain. [2Fe-2S] cluster is bound by residues C64, H66, C87, and H90.

[2Fe-2S] cluster is required as a cofactor.

It carries out the reaction theobromine + NADH + O2 + H(+) = 7-methylxanthine + formaldehyde + NAD(+) + H2O. It catalyses the reaction theobromine + NADPH + O2 + H(+) = 7-methylxanthine + formaldehyde + NADP(+) + H2O. The catalysed reaction is 3-methylxanthine + NADH + O2 + H(+) = xanthine + formaldehyde + NAD(+) + H2O. The enzyme catalyses 3-methylxanthine + NADPH + O2 + H(+) = xanthine + formaldehyde + NADP(+) + H2O. Functionally, involved in the caffeine degradation, which is the essential first step for assimilating the carbon and nitrogen in caffeine. Catalyzes the N3-demethylation of theobromine to produce 7-methylxanthine and formaldehyde. Also catalyzes the N3-demethylation of 3-methylxanthine, caffeine, and theophylline to xanthine, paraxanthine, and 1-methylxanthine, respectively. NADH is the preferred substrate. The sequence is that of Methylxanthine N3-demethylase NdmB (ndmB) from Pseudomonas putida (Arthrobacter siderocapsulatus).